We begin with the raw amino-acid sequence, 320 residues long: Cytochrome f (320 aa).

The first 35 residues, 1 to 35 (MQNRNTFSWVKEEMTRFISVSIMIYVITRTSISNA), serve as a signal peptide directing secretion. Residues Y36, C56, C59, and H60 each coordinate heme. A helical transmembrane segment spans residues 286 to 306 (VQGLLFFLASVILAQIFLVLK).

The protein belongs to the cytochrome f family. In terms of assembly, the 4 large subunits of the cytochrome b6-f complex are cytochrome b6, subunit IV (17 kDa polypeptide, petD), cytochrome f and the Rieske protein, while the 4 small subunits are PetG, PetL, PetM and PetN. The complex functions as a dimer. It depends on heme as a cofactor.

The protein localises to the plastid. The protein resides in the chloroplast thylakoid membrane. Component of the cytochrome b6-f complex, which mediates electron transfer between photosystem II (PSII) and photosystem I (PSI), cyclic electron flow around PSI, and state transitions. This chain is Cytochrome f, found in Calycanthus floridus var. glaucus (Eastern sweetshrub).